The following is a 46-amino-acid chain: Cysteine-rich venom protein asurin-1 (46 aa).

It belongs to the CRISP family. Contains 8 disulfide bonds. In terms of tissue distribution, expressed by the venom gland.

The protein resides in the secreted. Functionally, blocks contraction of smooth muscle elicited by high potassium-induced depolarization, but does not block caffeine-stimulated contraction. May target voltage-gated calcium channels on smooth muscle. In Austrelaps superbus (Lowland copperhead snake), this protein is Cysteine-rich venom protein asurin-1.